A 775-amino-acid polypeptide reads, in one-letter code: Chondroitin sulfate synthase 2 (775 aa).

At 1–15 the chain is on the cytoplasmic side; sequence MRASLLLSVLRPAGP. A helical; Signal-anchor for type II membrane protein transmembrane segment spans residues 16–34; the sequence is VAVGISLGFTLSLLSVTWV. The Lumenal segment spans residues 35-775; it reads EEPCGPGPPQ…LFEQEQGNST (741 aa). Residues 37-100 are disordered; sequence PCGPGPPQPG…YHPAQPGQAA (64 aa). Polar residues predominate over residues 54 to 66; sequence GNTNAARRPNSVQ. N-linked (GlcNAc...) asparagine glycosylation is found at Asn138 and Asn361. Asp617 contributes to the a divalent metal cation binding site.

Belongs to the chondroitin N-acetylgalactosaminyltransferase family. Interacts with PRKN. Mn(2+) serves as cofactor. The cofactor is Co(2+). Ubiquitous. Highly expressed in pancreas, ovary, brain, heart, skeletal muscle, colon, kidney, liver, stomach, spleen and placenta. As to expression, expressed in brain, spleen, ovary, testis, lung and peripheral mononuclear cells. In terms of tissue distribution, also ubiquitous.

It is found in the golgi apparatus. It localises to the golgi stack membrane. The protein resides in the cytoplasm. Its subcellular location is the cytosol. The protein localises to the mitochondrion. It is found in the mitochondrion matrix. The catalysed reaction is 3-O-(beta-D-GlcA-(1-&gt;3)-beta-D-GalNAc-(1-&gt;4)-beta-D-GlcA-(1-&gt;3)-beta-D-Gal-(1-&gt;3)-beta-D-Gal-(1-&gt;4)-beta-D-Xyl)-L-seryl-[protein] + UDP-N-acetyl-alpha-D-galactosamine = 3-O-(beta-D-GalNAc-(1-&gt;4)-beta-D-GlcA-(1-&gt;3)-beta-D-GalNAc-(1-&gt;4)-beta-D-GlcA-(1-&gt;3)-beta-D-Gal-(1-&gt;3)-beta-D-Gal-(1-&gt;4)-beta-D-Xyl)-L-seryl-[protein] + UDP + H(+). It carries out the reaction 3-O-{beta-D-GlcA-(1-&gt;3)-[beta-D-GalNAc-(1-&gt;4)-beta-D-GlcA-(1-&gt;3)](n)-beta-D-GalNAc-(1-&gt;4)-beta-D-GlcA-(1-&gt;3)-beta-D-Gal-(1-&gt;3)-beta-D-Gal-(1-&gt;4)-beta-D-Xyl}-L-seryl-[protein] + UDP-N-acetyl-alpha-D-galactosamine = 3-O-{[beta-D-GalNAc-(1-&gt;4)-beta-D-GlcA-(1-&gt;3)](n+1)-beta-D-GalNAc-(1-&gt;4)-beta-D-GlcA-(1-&gt;3)-beta-D-Gal-(1-&gt;3)-beta-D-Gal-(1-&gt;4)-beta-D-Xyl}-L-seryl-[protein] + UDP + H(+). The enzyme catalyses 3-O-(beta-D-GalNAc-(1-&gt;4)-beta-D-GlcA-(1-&gt;3)-beta-D-Gal-(1-&gt;3)-beta-D-Gal-(1-&gt;4)-beta-D-Xyl)-L-seryl-[protein] + UDP-alpha-D-glucuronate = 3-O-(beta-D-GlcA-(1-&gt;3)-beta-D-GalNAc-(1-&gt;4)-beta-D-GlcA-(1-&gt;3)-beta-D-Gal-(1-&gt;3)-beta-D-Gal-(1-&gt;4)-beta-D-Xyl)-L-seryl-[protein] + UDP + H(+). It catalyses the reaction 3-O-{[beta-D-GalNAc-(1-&gt;4)-beta-D-GlcA-(1-&gt;3)](n)-beta-D-GalNAc-(1-&gt;4)-beta-D-GlcA-(1-&gt;3)-beta-D-Gal-(1-&gt;3)-beta-D-Gal-(1-&gt;4)-beta-D-Xyl}-L-seryl-[protein] + UDP-alpha-D-glucuronate = 3-O-{beta-D-GlcA-(1-&gt;3)-[beta-D-GalNAc-(1-&gt;4)-beta-D-GlcA-(1-&gt;3)](n)-beta-D-GalNAc-(1-&gt;4)-beta-D-GlcA-(1-&gt;3)-beta-D-Gal-(1-&gt;3)-beta-D-Gal-(1-&gt;4)-beta-D-Xyl}-L-seryl-[protein] + UDP + H(+). Has both beta-1,3-glucuronic acid and beta-1,4-N-acetylgalactosamine transferase activity. Transfers glucuronic acid (GlcUA) from UDP-GlcUA and N-acetylgalactosamine (GalNAc) from UDP-GalNAc to the non-reducing end of the elongating chondroitin polymer. Seems to act as a specific activating factor for CHSY1 in chondroitin polymerization. Its function is as follows. May facilitate PRKN transport into the mitochondria. In collaboration with PRKN, may enhance cell viability and protect cells from oxidative stress. The protein is Chondroitin sulfate synthase 2 of Homo sapiens (Human).